Here is a 287-residue protein sequence, read N- to C-terminus: Glycine--tRNA ligase alpha subunit (287 aa).

The protein belongs to the class-II aminoacyl-tRNA synthetase family. As to quaternary structure, tetramer of two alpha and two beta subunits.

The protein localises to the cytoplasm. The catalysed reaction is tRNA(Gly) + glycine + ATP = glycyl-tRNA(Gly) + AMP + diphosphate. This is Glycine--tRNA ligase alpha subunit from Campylobacter jejuni (strain RM1221).